Reading from the N-terminus, the 405-residue chain is Phosphopentomutase (405 aa).

Residues aspartate 10, aspartate 303, histidine 308, aspartate 344, histidine 345, and histidine 356 each coordinate Mn(2+).

The protein belongs to the phosphopentomutase family. Requires Mn(2+) as cofactor.

The protein resides in the cytoplasm. It carries out the reaction 2-deoxy-alpha-D-ribose 1-phosphate = 2-deoxy-D-ribose 5-phosphate. It catalyses the reaction alpha-D-ribose 1-phosphate = D-ribose 5-phosphate. The protein operates within carbohydrate degradation; 2-deoxy-D-ribose 1-phosphate degradation; D-glyceraldehyde 3-phosphate and acetaldehyde from 2-deoxy-alpha-D-ribose 1-phosphate: step 1/2. Functionally, isomerase that catalyzes the conversion of deoxy-ribose 1-phosphate (dRib-1-P) and ribose 1-phosphate (Rib-1-P) to deoxy-ribose 5-phosphate (dRib-5-P) and ribose 5-phosphate (Rib-5-P), respectively. The polypeptide is Phosphopentomutase (Shewanella sediminis (strain HAW-EB3)).